Consider the following 96-residue polypeptide: MLRQYEVMYILHPELDAEKTESIIERFKGMIEQEGGEVTKIDRWGKRRFAYEIKKLREGYYVVMNFKAKAETAQELDRLLRISDDVVRHIVIREDK.

This sequence belongs to the bacterial ribosomal protein bS6 family.

Functionally, binds together with bS18 to 16S ribosomal RNA. This chain is Small ribosomal subunit protein bS6, found in Carboxydothermus hydrogenoformans (strain ATCC BAA-161 / DSM 6008 / Z-2901).